Here is a 447-residue protein sequence, read N- to C-terminus: Nacrein (447 aa).

Positions 1–17 (MYLHLTALCVVIPLCYG) are cleaved as a signal peptide. Residue Asn44 is glycosylated (N-linked (GlcNAc...) asparagine). The 397-residue stretch at 50-446 (AGFSYDRSIC…KNKVTVYKSF (397 aa)) folds into the Alpha-carbonic anhydrase domain. Residues His149, His151, and His174 each coordinate Zn(2+). The tract at residues 218 to 329 (DEPDDEECKH…GENGHKHGCR (112 aa)) is disordered. Basic and acidic residues predominate over residues 224–236 (ECKHILKGHHPDN). Residues 237 to 321 (NENGNGDNGN…NNGENGNNGE (85 aa)) are compositionally biased toward low complexity. 27 consecutive repeat copies span residues 242–244 (GDN), 245–247 (GNN), 248–250 (GYN), 251–253 (GDN), 254–256 (GNN), 257–259 (GDN), 260–262 (GNN), 263–265 (SYN), 266–268 (GDN), 269–271 (GNN), 272–274 (GVN), 275–277 (GNN), 278–280 (GYN), 281–283 (GDN), 284–286 (GNN), 287–289 (GDN), 290–292 (GNN), 293–295 (GYN), 296–298 (GDN), 299–301 (GNN), 302–304 (GDN), 305–307 (GNN), 308–310 (GEN), 311–313 (GNN), 314–316 (GEN), 317–318 (GN), and 320–322 (GEN). The 27 X 3 AA approximate tandem repeats of G-X-N stretch occupies residues 242–322 (GDNGNNGYNG…NGENGNNGEN (81 aa)). Asn261 is a glycosylation site (N-linked (GlcNAc...) asparagine). 387–388 (TT) contributes to the substrate binding site.

This sequence belongs to the alpha-carbonic anhydrase family. As to quaternary structure, homooligomer; disulfide-linked. May also be disulfide-linked to insoluble organic matrix. It depends on Zn(2+) as a cofactor. N-glycosylated. As to expression, expressed at whole regions of the mantle epithelium tissue. Is found in the aragonitic nacreous and calcitic prismatic and foliated layers.

It localises to the secreted. Its subcellular location is the extracellular space. The protein resides in the extracellular matrix. The catalysed reaction is hydrogencarbonate + H(+) = CO2 + H2O. Acts as a negative regulator for calcification in the shells of mollusks. May function both as a calcium concentrator and as a carbonic anhydrase required for production of carbonate ions, which are assembled to CaCO(3) at mineralization sites. Is important for shell formation in both the calcitic prismatic layer and the aragonitic nacreous layer. The protein is Nacrein of Pinctada fucata (Akoya pearl oyster).